The sequence spans 1327 residues: P-glycoprotein 14 (1327 aa).

Over residues 1–17 (MAPKDDPDNRGFDDQRR) the composition is skewed to basic and acidic residues. Residues 1-23 (MAPKDDPDNRGFDDQRRPSQRST) are disordered. The Cytoplasmic segment spans residues 1–104 (MAPKDDPDNR…RYGKKFDYLL (104 aa)). A helical membrane pass occupies residues 105-125 (LFIGTICAIISGVSQPILALV). One can recognise an ABC transmembrane type-1 1 domain in the interval 106–394 (FIGTICAIIS…ISPHMMVLLN (289 aa)). Residues 126-151 (SGRVTNALLVYPPTSKQFRNKANENV) are Extracellular-facing. A helical membrane pass occupies residues 152–172 (YIFLGIGIFISITNFIQYMCF). Topologically, residues 173-225 (QHCCTRVMAQMRHRFVYSVLRQNAGWFDKNHSGTITTKLNDSMERIREGIGDK) are cytoplasmic. A helical membrane pass occupies residues 226–246 (LGVLLRGFAMLIAAIVVAYIY). Glu247 is a topological domain (extracellular). A helical membrane pass occupies residues 248-268 (WRLASMMLGVAPTCCICMSLL). Residues 269–331 (ARQMTSTTIK…KFAVWKGFWS (63 aa)) are Cytoplasmic-facing. A helical transmembrane segment spans residues 332–352 (GFFGGLFFFWLFSFLGCGMLY). Residues 353–364 (GAYLLKVGIITT) are Extracellular-facing. A helical transmembrane segment spans residues 365-385 (PGDVFIVVMSMLLGAYFLGLI). Over 386–766 (SPHMMVLLNA…NAKGNYLYMF (381 aa)) the chain is Cytoplasmic. The ABC transporter 1 domain occupies 429–665 (VKFENVHFRY…GGRYFDLVKA (237 aa)). 464 to 471 (GHSGCGKS) is an ATP binding site. A disordered region spans residues 671-721 (DPEATEEFEEEEIDLDDTSRSSRRSSMTSARSGSEAFRRGNSLNDSFSGSK). Residues 673-686 (EATEEFEEEEIDLD) show a composition bias toward acidic residues. The segment covering 694–704 (RSSMTSARSGS) has biased composition (low complexity). Positions 711 to 721 (NSLNDSFSGSK) are enriched in polar residues. Residues 766–1053 (FLGTVFALIR…SAQYFPEFVK (288 aa)) enclose the ABC transmembrane type-1 2 domain. A helical transmembrane segment spans residues 767 to 789 (LGTVFALIRGLELPALALIFGWV). Over 790-805 (FEGFTFVPYGGRMMHR) the chain is Extracellular. The chain crosses the membrane as a helical span at residues 806–826 (MAMAVIAFASVGVGVWFSQLA). At 827–886 (SSVLFAVVSENLSMRFRVQSFRNLLYQDASYFDNPAHAPGKLITRLASDAPNIKAVVDAR) the chain is on the cytoplasmic side. A helical transmembrane segment spans residues 887 to 907 (MLQVIYALAAIIANIAIAFIY). The Extracellular segment spans residues 908-910 (CWQ). Residues 911 to 931 (IGILGTSLILLLAFVMIGLAY) traverse the membrane as a helical segment. Over 932–996 (KISLMNVEQI…KGMIEAINYS (65 aa)) the chain is Cytoplasmic. The chain crosses the membrane as a helical span at residues 997 to 1017 (LTQSFMYFMMCFTYAVGIRII). Residues 1018-1030 (YQGDKSSDDTFKG) lie on the Extracellular side of the membrane. A helical membrane pass occupies residues 1031 to 1051 (IIAMMLGAVAVMNSAQYFPEF). Over 1052–1327 (VKAKTAAGML…KLIKKQDLAV (276 aa)) the chain is Cytoplasmic. The ABC transporter 2 domain maps to 1086-1322 (ILFENVKFSY…KGRYYKLIKK (237 aa)). 1121-1128 (GPSGSGKS) contributes to the ATP binding site.

The protein belongs to the ABC transporter superfamily. ABCB family. Multidrug resistance exporter (TC 3.A.1.201) subfamily. In terms of tissue distribution, expressed in pharyngeal epithelial cells that surround the anterior pharyngeal cuticle. Shares same expression pattern as sms-5.

It is found in the apical cell membrane. In terms of biological role, contributes to the establishment of a polar lipid barrier to block small molecule passage into the pharyngeal cuticle. Probably exports polar lipids into the developing pharyngeal cuticle to protect against xenobiotic insult. Likely functions in the same pathway as sphingomyelin synthase sms-5. This chain is P-glycoprotein 14, found in Caenorhabditis elegans.